The primary structure comprises 324 residues: Formimidoylglutamase (324 aa).

His-124, Asp-153, His-155, Asp-157, Asp-245, and Asp-247 together coordinate Mn(2+).

It belongs to the arginase family. It depends on Mn(2+) as a cofactor.

The enzyme catalyses N-formimidoyl-L-glutamate + H2O = formamide + L-glutamate. The protein operates within amino-acid degradation; L-histidine degradation into L-glutamate; L-glutamate from N-formimidoyl-L-glutamate (hydrolase route): step 1/1. In terms of biological role, catalyzes the conversion of N-formimidoyl-L-glutamate to L-glutamate and formamide. In Hahella chejuensis (strain KCTC 2396), this protein is Formimidoylglutamase.